A 177-amino-acid chain; its full sequence is Ribulose bisphosphate carboxylase small subunit, chloroplastic 3 (177 aa).

The N-terminal 56 residues, 1–56 (MASSMMASTAAAVARAGPAQSSMVPFNACRSSVPFPATRKANNNLSTLPGNGGRVS), are a transit peptide targeting the chloroplast.

It belongs to the RuBisCO small chain family. In terms of assembly, heterohexadecamer of 8 large and 8 small subunits.

The protein localises to the plastid. It localises to the chloroplast. Its function is as follows. RuBisCO catalyzes two reactions: the carboxylation of D-ribulose 1,5-bisphosphate, the primary event in carbon dioxide fixation, as well as the oxidative fragmentation of the pentose substrate. Both reactions occur simultaneously and in competition at the same active site. Although the small subunit is not catalytic it is essential for maximal activity. The sequence is that of Ribulose bisphosphate carboxylase small subunit, chloroplastic 3 from Lemna gibba (Swollen duckweed).